A 431-amino-acid chain; its full sequence is Serine hydroxymethyltransferase (431 aa).

(6S)-5,6,7,8-tetrahydrofolate contacts are provided by residues L126 and 130-132 (GHL). K235 bears the N6-(pyridoxal phosphate)lysine mark.

The protein belongs to the SHMT family. As to quaternary structure, homodimer. It depends on pyridoxal 5'-phosphate as a cofactor.

It localises to the cytoplasm. It catalyses the reaction (6R)-5,10-methylene-5,6,7,8-tetrahydrofolate + glycine + H2O = (6S)-5,6,7,8-tetrahydrofolate + L-serine. The protein operates within one-carbon metabolism; tetrahydrofolate interconversion. It functions in the pathway amino-acid biosynthesis; glycine biosynthesis; glycine from L-serine: step 1/1. Catalyzes the reversible interconversion of serine and glycine with tetrahydrofolate (THF) serving as the one-carbon carrier. This reaction serves as the major source of one-carbon groups required for the biosynthesis of purines, thymidylate, methionine, and other important biomolecules. Also exhibits THF-independent aldolase activity toward beta-hydroxyamino acids, producing glycine and aldehydes, via a retro-aldol mechanism. The sequence is that of Serine hydroxymethyltransferase from Nocardia farcinica (strain IFM 10152).